Consider the following 122-residue polypeptide: UPF0102 protein Gmet_2864 (122 aa).

It belongs to the UPF0102 family.

This Geobacter metallireducens (strain ATCC 53774 / DSM 7210 / GS-15) protein is UPF0102 protein Gmet_2864.